Reading from the N-terminus, the 246-residue chain is 1-(5-phosphoribosyl)-5-[(5-phosphoribosylamino)methylideneamino] imidazole-4-carboxamide isomerase (246 aa).

The Proton acceptor role is filled by Asp-8. Asp-129 serves as the catalytic Proton donor.

This sequence belongs to the HisA/HisF family.

It localises to the cytoplasm. It catalyses the reaction 1-(5-phospho-beta-D-ribosyl)-5-[(5-phospho-beta-D-ribosylamino)methylideneamino]imidazole-4-carboxamide = 5-[(5-phospho-1-deoxy-D-ribulos-1-ylimino)methylamino]-1-(5-phospho-beta-D-ribosyl)imidazole-4-carboxamide. Its pathway is amino-acid biosynthesis; L-histidine biosynthesis; L-histidine from 5-phospho-alpha-D-ribose 1-diphosphate: step 4/9. The polypeptide is 1-(5-phosphoribosyl)-5-[(5-phosphoribosylamino)methylideneamino] imidazole-4-carboxamide isomerase (Desulforamulus reducens (strain ATCC BAA-1160 / DSM 100696 / MI-1) (Desulfotomaculum reducens)).